The primary structure comprises 732 residues: Polyribonucleotide nucleotidyltransferase (732 aa).

Mg(2+) is bound by residues D483 and D489. The region spanning 550 to 609 (PRIVTVQIPVDKIGELIGPKGKNIRGIQDETGAELSVEDDGTVTIAAVGGDSMERAKQMV) is the KH domain. The 69-residue stretch at 619–687 (GETYEGTVKT…ERGRLRLSMK (69 aa)) folds into the S1 motif domain. Residues 684–732 (LSMKALLPKPEGMPDEPPQSERPRRDDGERSGGDRGGRGGRNGGGRDRR) are disordered. A compositionally biased stretch (basic and acidic residues) spans 702 to 720 (QSERPRRDDGERSGGDRGG).

Belongs to the polyribonucleotide nucleotidyltransferase family. Requires Mg(2+) as cofactor.

It is found in the cytoplasm. The catalysed reaction is RNA(n+1) + phosphate = RNA(n) + a ribonucleoside 5'-diphosphate. In terms of biological role, involved in mRNA degradation. Catalyzes the phosphorolysis of single-stranded polyribonucleotides processively in the 3'- to 5'-direction. The polypeptide is Polyribonucleotide nucleotidyltransferase (Gemmatimonas aurantiaca (strain DSM 14586 / JCM 11422 / NBRC 100505 / T-27)).